The following is a 375-amino-acid chain: Trichodiene synthase (375 aa).

This sequence belongs to the trichodiene synthase family.

The enzyme catalyses (2E,6E)-farnesyl diphosphate = trichodiene + diphosphate. It functions in the pathway sesquiterpene biosynthesis; trichothecene biosynthesis. TS is a member of the terpene cyclase group of enzymes. It catalyzes the isomerization and cyclization of farnesyl pyro-phosphate to form trichodiene, the first cyclic intermediate in the biosynthetic pathway for trichothecenes. It serves to branch trichothecene biosynthesis from the isoprenoid pathway. The chain is Trichodiene synthase (TRI5) from Gibberella zeae (strain ATCC MYA-4620 / CBS 123657 / FGSC 9075 / NRRL 31084 / PH-1) (Wheat head blight fungus).